Reading from the N-terminus, the 123-residue chain is Small ribosomal subunit protein uS12 (123 aa).

A 3-methylthioaspartic acid modification is found at Asp89. Positions 100–123 are disordered; the sequence is GSLDTSGVKGRNQGRSKYGTKKPK. Residues 111-123 are compositionally biased toward basic residues; that stretch reads NQGRSKYGTKKPK.

Belongs to the universal ribosomal protein uS12 family. As to quaternary structure, part of the 30S ribosomal subunit. Contacts proteins S8 and S17. May interact with IF1 in the 30S initiation complex.

Its function is as follows. With S4 and S5 plays an important role in translational accuracy. In terms of biological role, interacts with and stabilizes bases of the 16S rRNA that are involved in tRNA selection in the A site and with the mRNA backbone. Located at the interface of the 30S and 50S subunits, it traverses the body of the 30S subunit contacting proteins on the other side and probably holding the rRNA structure together. The combined cluster of proteins S8, S12 and S17 appears to hold together the shoulder and platform of the 30S subunit. This Pseudomonas syringae pv. syringae (strain B728a) protein is Small ribosomal subunit protein uS12.